The following is a 140-amino-acid chain: Gonadotropin subunit beta-2 (140 aa).

The N-terminal stretch at M1–S23 is a signal peptide. 6 disulfides stabilise this stretch: C29–C77, C43–C92, C46–C130, C54–C108, C58–C110, and C113–C120. N33 is a glycosylation site (N-linked (GlcNAc...) asparagine).

It belongs to the glycoprotein hormones subunit beta family. Heterodimer of an alpha and a beta chain.

It is found in the secreted. Involved in gametogenesis and steroidogenesis. The protein is Gonadotropin subunit beta-2 (cgbb) of Ictalurus punctatus (Channel catfish).